Here is a 242-residue protein sequence, read N- to C-terminus: MKLSYFYVAADVPDGIIPESSVVIDVLRATTTIAWALENGADSVQVFADVDELKNQAKTFDSKEKILVGERGGKKLDGFDLGNSPLGVSSESVKGKRVFMSTTNGTRSLHRVRESKSLYTMALPNRKAIAERLKSDNPKEVWIVGSGWEGSYSLEDSLAAGALASLLMDQLESVQIVNDELMASIALWKNWENDVEGCLRIASHGQRLAGIGNHDDDFACCASLDNLSVIPKQIEMGVLRSN.

The protein belongs to the ComB family. It depends on Mg(2+) as a cofactor.

The catalysed reaction is (2R)-O-phospho-3-sulfolactate + H2O = (2R)-3-sulfolactate + phosphate. The polypeptide is Probable 2-phosphosulfolactate phosphatase (Prochlorococcus marinus (strain NATL1A)).